Here is a 247-residue protein sequence, read N- to C-terminus: Adenosylcobinamide-GDP ribazoletransferase (247 aa).

Transmembrane regions (helical) follow at residues I34 to L54, C59 to F79, G113 to L133, M138 to Y158, V171 to T193, and P197 to L219.

This sequence belongs to the CobS family. It depends on Mg(2+) as a cofactor.

The protein resides in the cell inner membrane. The enzyme catalyses alpha-ribazole + adenosylcob(III)inamide-GDP = adenosylcob(III)alamin + GMP + H(+). It catalyses the reaction alpha-ribazole 5'-phosphate + adenosylcob(III)inamide-GDP = adenosylcob(III)alamin 5'-phosphate + GMP + H(+). Its pathway is cofactor biosynthesis; adenosylcobalamin biosynthesis; adenosylcobalamin from cob(II)yrinate a,c-diamide: step 7/7. In terms of biological role, joins adenosylcobinamide-GDP and alpha-ribazole to generate adenosylcobalamin (Ado-cobalamin). Also synthesizes adenosylcobalamin 5'-phosphate from adenosylcobinamide-GDP and alpha-ribazole 5'-phosphate. This is Adenosylcobinamide-GDP ribazoletransferase from Salmonella newport (strain SL254).